Consider the following 411-residue polypeptide: MGLKNLFEKMEPAFLPGGKYSKLYPIFESIYTLLYTPGTVTHKNTHVRDALDSKRMMITVFLALFPAIFYGMYNVGNQAIPALNQLGNLDQLIANDWHYALASSLGLDLTANATWGSKMALGAIFFLPIYLVVFTVCTIWELLFSVVRGHEVNEGMFVSTILFALIVPPTLPLWQAALGITFGIIVAKEIFGGVGRNFMNPALAGRAFLFFAYPAQISGDTVWTAADGFSGATALSQWSQGGQGALQHTVTGAPITWMDAFVGNLPGSMGEVSTLAILIGGAVIVFTRIAAWRIIAGVMIGMIATSTLFNLIGSETNPMFSMPWHWHFVLGGFALGMVFMATDPVSASFTNTGKWWYGALIGVMAVLIRTVNPAYPEGMMLAILFANLFAPIFDYIVVQANIKRRRARTNG.

3 helical membrane passes run 56 to 76, 120 to 140, and 166 to 186; these read MMITVFLALFPAIFYGMYNVG, ALGAIFFLPIYLVVFTVCTIW, and IVPPTLPLWQAALGITFGIIV. T233 is subject to FMN phosphoryl threonine. A run of 5 helical transmembrane segments spans residues 272–292, 294–314, 319–339, 348–368, and 378–398; these read VSTLAILIGGAVIVFTRIAAW, IIAGVMIGMIATSTLFNLIGS, MFSMPWHWHFVLGGFALGMVF, SFTNTGKWWYGALIGVMAVLI, and GMMLAILFANLFAPIFDYIVV.

It belongs to the NqrB/RnfD family. Composed of six subunits; NqrA, NqrB, NqrC, NqrD, NqrE and NqrF. It depends on FMN as a cofactor.

It localises to the cell inner membrane. It carries out the reaction a ubiquinone + n Na(+)(in) + NADH + H(+) = a ubiquinol + n Na(+)(out) + NAD(+). Its function is as follows. NQR complex catalyzes the reduction of ubiquinone-1 to ubiquinol by two successive reactions, coupled with the transport of Na(+) ions from the cytoplasm to the periplasm. NqrA to NqrE are probably involved in the second step, the conversion of ubisemiquinone to ubiquinol. This chain is Na(+)-translocating NADH-quinone reductase subunit B, found in Haemophilus influenzae (strain 86-028NP).